We begin with the raw amino-acid sequence, 235 residues long: Ribosomal RNA small subunit methyltransferase G (235 aa).

S-adenosyl-L-methionine contacts are provided by residues Gly-75, Phe-80, 126–127, and Arg-145; that span reads AE.

It belongs to the methyltransferase superfamily. RNA methyltransferase RsmG family.

The protein localises to the cytoplasm. Specifically methylates the N7 position of a guanine in 16S rRNA. In Carboxydothermus hydrogenoformans (strain ATCC BAA-161 / DSM 6008 / Z-2901), this protein is Ribosomal RNA small subunit methyltransferase G.